A 550-amino-acid chain; its full sequence is Arginine--tRNA ligase (550 aa).

The 'HIGH' region motif lies at 130-140 (ANPTGPIHIGG).

Belongs to the class-I aminoacyl-tRNA synthetase family. As to quaternary structure, monomer.

Its subcellular location is the cytoplasm. It carries out the reaction tRNA(Arg) + L-arginine + ATP = L-arginyl-tRNA(Arg) + AMP + diphosphate. The polypeptide is Arginine--tRNA ligase (Mycolicibacterium gilvum (strain PYR-GCK) (Mycobacterium gilvum (strain PYR-GCK))).